The following is a 306-amino-acid chain: uncharacterized protein (306 aa).

To M.jannaschii MJ0658.

This is an uncharacterized protein from Methanothermobacter thermautotrophicus (strain ATCC 29096 / DSM 1053 / JCM 10044 / NBRC 100330 / Delta H) (Methanobacterium thermoautotrophicum).